The primary structure comprises 513 residues: ATP synthase subunit alpha (513 aa).

169–176 (GDRQCGKT) is a binding site for ATP.

The protein belongs to the ATPase alpha/beta chains family. F-type ATPases have 2 components, CF(1) - the catalytic core - and CF(0) - the membrane proton channel. CF(1) has five subunits: alpha(3), beta(3), gamma(1), delta(1), epsilon(1). CF(0) has three main subunits: a(1), b(2) and c(9-12). The alpha and beta chains form an alternating ring which encloses part of the gamma chain. CF(1) is attached to CF(0) by a central stalk formed by the gamma and epsilon chains, while a peripheral stalk is formed by the delta and b chains.

Its subcellular location is the cell inner membrane. It carries out the reaction ATP + H2O + 4 H(+)(in) = ADP + phosphate + 5 H(+)(out). Its function is as follows. Produces ATP from ADP in the presence of a proton gradient across the membrane. The alpha chain is a regulatory subunit. This is ATP synthase subunit alpha from Burkholderia vietnamiensis (strain G4 / LMG 22486) (Burkholderia cepacia (strain R1808)).